The primary structure comprises 434 residues: Pre-mRNA-splicing factor PRP46 (434 aa).

WD repeat units lie at residues 120-160 (GHTG…LKIT), 163-202 (GHVMSVRDIAISKRHPYMFSASEDKLVKCWDLERNTAIRD), 205-244 (GHLSGVHTVDVHPSLDIIATAGRDAVVRLWDIRSRSEIMV), 247-288 (GHKS…KVLT), 290-329 (HSRNIRDLTLHPAEFSFASVSTNDVRSWKLPEGQLLTNFQ), 331-369 (QNTGILNTVSINHDNVLLAGGDDGTLCFYDYKTGHKYQS), and 380-419 (ESERSILCSTFDVTGTRLITGEGDKSIKIWKQVPDATEDT).

This sequence belongs to the WD repeat PRL1/PRL2 family. As to quaternary structure, associated with the spliceosome.

The protein localises to the cytoplasm. It localises to the nucleus. In terms of biological role, involved in pre-mRNA splicing and required for cell cycle progression at G2/M. The polypeptide is Pre-mRNA-splicing factor PRP46 (PRP46) (Kluyveromyces lactis (strain ATCC 8585 / CBS 2359 / DSM 70799 / NBRC 1267 / NRRL Y-1140 / WM37) (Yeast)).